A 150-amino-acid polypeptide reads, in one-letter code: Large ribosomal subunit protein bL9 (150 aa).

It belongs to the bacterial ribosomal protein bL9 family.

Functionally, binds to the 23S rRNA. This chain is Large ribosomal subunit protein bL9, found in Corynebacterium diphtheriae (strain ATCC 700971 / NCTC 13129 / Biotype gravis).